A 573-amino-acid polypeptide reads, in one-letter code: Potassium-transporting ATPase potassium-binding subunit (573 aa).

Transmembrane regions (helical) follow at residues 6 to 26 (ILFA…GSYI), 66 to 86 (FFSL…ILLL), 135 to 155 (ALAV…IALI), 177 to 197 (VFWI…FQGV), 257 to 277 (IQMV…GKWV), 283 to 303 (GWLI…VMTI), 382 to 402 (IFGG…LAVF), 428 to 448 (MFAL…AAVI), 493 to 513 (ITIA…VIML), and 537 to 557 (FIFA…TIFP).

This sequence belongs to the KdpA family. In terms of assembly, the system is composed of three essential subunits: KdpA, KdpB and KdpC.

The protein resides in the cell inner membrane. In terms of biological role, part of the high-affinity ATP-driven potassium transport (or Kdp) system, which catalyzes the hydrolysis of ATP coupled with the electrogenic transport of potassium into the cytoplasm. This subunit binds the periplasmic potassium ions and delivers the ions to the membrane domain of KdpB through an intramembrane tunnel. The chain is Potassium-transporting ATPase potassium-binding subunit from Francisella tularensis subsp. tularensis (strain WY96-3418).